The following is a 233-amino-acid chain: Ras-related protein RABA6a (233 aa).

20 to 27 contacts GTP; the sequence is GDSAVGKS. Positions 42–50 match the Effector region motif; sequence SKPTIGVEF. GTP-binding positions include 68–72, 126–129, and 156–157; these read DTAGQ, NKSD, and SA. S-geranylgeranyl cysteine attachment occurs at residues Cys230 and Cys231.

This sequence belongs to the small GTPase superfamily. Rab family.

The protein resides in the cell membrane. Intracellular vesicle trafficking and protein transport. In Arabidopsis thaliana (Mouse-ear cress), this protein is Ras-related protein RABA6a (RABA6A).